We begin with the raw amino-acid sequence, 505 residues long: Protein ERGIC-53-like (505 aa).

Positions 1–25 are cleaved as a signal peptide; it reads MLEIRGLSPSLCLLSLLLVLHGAER. Residues 26 to 438 lie on the Lumenal side of the membrane; the sequence is SQPPPRRRFE…SGWLLGSSTC (413 aa). The region spanning 32-254 is the L-type lectin-like domain; that stretch reads RRFEYKLSFK…DVLSFLTFSL (223 aa). N84 carries N-linked (GlcNAc...) asparagine glycosylation. A disulfide bond links C177 and C216. The helical transmembrane segment at 439–459 threads the bilayer; it reads LHTSIFLFFLLLQTVGFFCYV. At 460–505 the chain is on the cytoplasmic side; that stretch reads NFSRQELDKRLQEYLSTGSLSLEPALPITRTIGVLRRQPISPSMQA.

It is found in the endoplasmic reticulum-Golgi intermediate compartment membrane. This Mus musculus (Mouse) protein is Protein ERGIC-53-like (Lman1l).